We begin with the raw amino-acid sequence, 403 residues long: Phosphoglycerate kinase (403 aa).

Residues 21–23, Arg-36, 59–62, Arg-119, and Arg-154 contribute to the substrate site; these read DFN and HLGR. ATP is bound by residues Lys-207, Gly-299, Glu-330, and 357 to 360; that span reads GGDA.

The protein belongs to the phosphoglycerate kinase family. In terms of assembly, monomer.

The protein resides in the cytoplasm. The enzyme catalyses (2R)-3-phosphoglycerate + ATP = (2R)-3-phospho-glyceroyl phosphate + ADP. It functions in the pathway carbohydrate degradation; glycolysis; pyruvate from D-glyceraldehyde 3-phosphate: step 2/5. This Chlamydia abortus (strain DSM 27085 / S26/3) (Chlamydophila abortus) protein is Phosphoglycerate kinase.